The chain runs to 312 residues: Olfactory receptor 10P22 (312 aa).

At 1 to 26 the chain is on the extracellular side; that stretch reads MGDDNDTDITEFILLGFSGYGFLQGH. The N-linked (GlcNAc...) asparagine glycan is linked to Asn5. Residues 27 to 47 form a helical membrane-spanning segment; it reads LFWGVLCIYVVTLLGNSLIVL. Residues 48–57 lie on the Cytoplasmic side of the membrane; the sequence is LTLADSALHS. Residues 58-78 form a helical membrane-spanning segment; the sequence is PMYFFLRHFSVVEILYTTTIV. At 79–89 the chain is on the extracellular side; the sequence is PRMLADLRSSC. Residues 90–110 traverse the membrane as a helical segment; that stretch reads PTIPLASCFTQLYFFALFGIA. The Cytoplasmic portion of the chain corresponds to 111 to 143; the sequence is ECCLLTAMAYDRYAAICCPLHYTTLMSQGTYTG. A helical membrane pass occupies residues 144 to 164; it reads LVGASYLAGVISGTTHSIFIF. The Extracellular portion of the chain corresponds to 165–205; sequence TLPFRGAKTIHHFLCDILPVLRLATASTFWGEVGNLFVTIT. The chain crosses the membrane as a helical span at residues 206–226; that stretch reads FIFVPFLLIVASYACILVTIL. Over 227–236 the chain is Cytoplasmic; sequence GVATSQGRQK. A helical membrane pass occupies residues 237–257; it reads LFSTCSSHLFVVILFFGTATV. Over 258-271 the chain is Extracellular; the sequence is AYMRPQADSFGNTD. Residues 272-292 traverse the membrane as a helical segment; the sequence is QILTLVYTVVTPMCNPFVYSL. The Cytoplasmic segment spans residues 293–312; it reads RNKEVTGAMRRLMKRYLWGP.

The protein belongs to the G-protein coupled receptor 1 family.

It localises to the cell membrane. In terms of biological role, odorant receptor. The polypeptide is Olfactory receptor 10P22 (Mus musculus (Mouse)).